The primary structure comprises 492 residues: Glutamyl-tRNA(Gln) amidotransferase subunit A, mitochondrial (492 aa).

Catalysis depends on charge relay system residues lysine 78 and serine 159. Residue serine 183 is the Acyl-ester intermediate of the active site.

This sequence belongs to the amidase family. GatA subfamily. Subunit of the heterotrimeric GatCAB amidotransferase (AdT) complex, composed of A, B and C subunits.

It localises to the mitochondrion. The enzyme catalyses L-glutamyl-tRNA(Gln) + L-glutamine + ATP + H2O = L-glutaminyl-tRNA(Gln) + L-glutamate + ADP + phosphate + H(+). In terms of biological role, allows the formation of correctly charged Gln-tRNA(Gln) through the transamidation of misacylated Glu-tRNA(Gln) in the mitochondria. The reaction takes place in the presence of glutamine and ATP through an activated gamma-phospho-Glu-tRNA(Gln). The polypeptide is Glutamyl-tRNA(Gln) amidotransferase subunit A, mitochondrial (Anopheles gambiae (African malaria mosquito)).